A 221-amino-acid polypeptide reads, in one-letter code: Uracil-DNA glycosylase (221 aa).

Catalysis depends on Asp-63, which acts as the Proton acceptor.

Belongs to the uracil-DNA glycosylase (UDG) superfamily. UNG family.

It is found in the cytoplasm. The enzyme catalyses Hydrolyzes single-stranded DNA or mismatched double-stranded DNA and polynucleotides, releasing free uracil.. Excises uracil residues from the DNA which can arise as a result of misincorporation of dUMP residues by DNA polymerase or due to deamination of cytosine. The chain is Uracil-DNA glycosylase from Blochmanniella floridana.